The chain runs to 2440 residues: Nuclear receptor corepressor 1 (2440 aa).

The segment covering 1-18 (MSSSGYPPNQGAFSTEQS) has biased composition (polar residues). Disordered stretches follow at residues 1–177 (MSSS…SKLS) and 206–231 (QQQLEEEAAKPPEPEKPVSPPPVEQK). The interval 1-373 (MSSSGYPPNQ…QRGAGLSATI (373 aa)) is interaction with ZBTB33 and HEXIM1. Residues 51-64 (SQASQLLQQQQQQQ) show a composition bias toward low complexity. Composition is skewed to basic and acidic residues over residues 77–88 (PGSDRPQERRTS), 99–119 (VDHDSLESKRPRLEQVSDSHF), and 141–155 (ADAKKDPAFGGKHEA). S172 bears the Phosphoserine mark. Residues 174-216 (SKLSKEELIQSMDRVDREIAKVEQQILKLKKKQQQLEEEAAKP) adopt a coiled-coil conformation. Positions 212–221 (EAAKPPEPEK) are enriched in basic and acidic residues. Position 224 is a phosphoserine (S224). The tract at residues 254-312 (FEGLGPKVELPLYNQPSDTKVYHENIKTNQVMRKKLILFFKRRNHARKQREQKICQRYD) is interaction with SIN3A/B. A coiled-coil region spans residues 299 to 328 (ARKQREQKICQRYDQLMEAWEKKVDRIENN). The SANT 1 domain maps to 435–486 (QFMNVWTDHEKEIFKDKFIQHPKNFGLIASYLERKSVPDCVLYYYLTKKNEN). Disordered regions lie at residues 497-632 (KRRG…TEEE) and 677-915 (NLLQ…GSIL). The stretch at 501 to 557 (RNQQIARPSQEEKVEEKEEDKAEKTEKKEEEKKDEEEKDEKEDSKENTKEKDKIDGT) forms a coiled coil. 2 stretches are compositionally biased toward basic and acidic residues: residues 509 to 531 (SQEEKVEEKEEDKAEKTEKKEEE) and 541 to 556 (KEDSKENTKEKDKIDG). The segment covering 592–605 (EAAAASAAAAAATE) has biased composition (low complexity). Residues 606-617 (EPPPPLPPPPEP) show a composition bias toward pro residues. The 52-residue stretch at 623-674 (VETSRWTEEEMEVAKKGLVEHGRNWAAIAKMVGTKSEAQCKNFYFNYKRRHN) folds into the SANT 2 domain. Residues 698–708 (QCESVASTVSA) show a composition bias toward polar residues. Acidic residues predominate over residues 709–728 (QEDEDIEASNEEENPEDSEV). Residues 752 to 768 (ELEPTTETAPSTSPSLA) are compositionally biased toward low complexity. Residues 781 to 792 (ETQVNDSISAET) are compositionally biased toward polar residues. A compositionally biased stretch (basic and acidic residues) spans 820-859 (DSVDVEVRVPENHASKVEGDNTKERDLDRASEKVEPRDED). Polar residues-rich tracts occupy residues 864-883 (QQINAQRPEPQSDNDSSATC) and 906-915 (SLLNPTGSIL). An interaction with ETO region spans residues 988-1816 (RSSTSPCGTS…QGLPASRYNT (829 aa)). S999 bears the Phosphoserine mark. Residues 1022-1046 (VRLPTTRPTRPPPPLIPSSKTTVAS) are disordered. Residue K1106 forms a Glycyl lysine isopeptide (Lys-Gly) (interchain with G-Cter in SUMO1); alternate linkage. K1106 is covalently cross-linked (Glycyl lysine isopeptide (Lys-Gly) (interchain with G-Cter in SUMO2); alternate). S1111 bears the Phosphoserine mark. K1184 participates in a covalent cross-link: Glycyl lysine isopeptide (Lys-Gly) (interchain with G-Cter in SUMO2). The tract at residues 1184-1204 (KGSISRMPIEDSSPEKGREEA) is disordered. S1195, S1196, S1249, S1263, S1281, and S1322 each carry phosphoserine. K1336 bears the N6-acetyllysine mark. Residue T1367 is modified to Phosphothreonine. K1389 participates in a covalent cross-link: Glycyl lysine isopeptide (Lys-Gly) (interchain with G-Cter in SUMO2). K1412 is covalently cross-linked (Glycyl lysine isopeptide (Lys-Gly) (interchain with G-Cter in SUMO2); alternate). The residue at position 1412 (K1412) is an N6-acetyllysine; alternate. The segment at 1440 to 1459 (AGETVRSRHTSVVSSGPSVL) is disordered. Phosphoserine is present on residues S1450 and S1472. Residues 1488-1512 (YQNTMSRGSPMMNRTSDVTISSNKS) are compositionally biased toward polar residues. The segment at 1488–1554 (YQNTMSRGSP…SPFDPHHRGS (67 aa)) is disordered. Residues 1501–2440 (RTSDVTISSN…QYETLSDSDD (940 aa)) are interaction with C1D. K1518 participates in a covalent cross-link: Glycyl lysine isopeptide (Lys-Gly) (interchain with G-Cter in SUMO2). Position 1592 is a phosphoserine (S1592). Disordered stretches follow at residues 1690 to 1759 (PRPY…SPSP) and 1884 to 1922 (SSAFPSGKPQPHSSVVYSEAGKDKGPPPKSRYEEELRTR). Composition is skewed to basic and acidic residues over residues 1712 to 1729 (AEREREREREKERERERI) and 1903 to 1921 (AGKDKGPPPKSRYEEELRT). Residues 1933–1937 (IDVII) carry the CORNR box 1 motif. The tract at residues 1943-1969 (SDKDARERGSQSSDSSSSLSSHRYETP) is disordered. Residues 1952–1963 (SQSSDSSSSLSS) show a composition bias toward low complexity. Residues S1977 and S1981 each carry the phosphoserine modification. The disordered stretch occupies residues 2006–2041 (PTRQYEGPLHHYRPQQESPSPQQQLPPSSQAEGMGQ). Over residues 2020 to 2035 (QQESPSPQQQLPPSSQ) the composition is skewed to low complexity. Residues 2032-2115 (PSSQAEGMGQ…QAQSVHHQRP (84 aa)) are ID1. A required for interaction with RARA in the absence of its ligand region spans residues 2047–2050 (RLIT). A CORNR box 2 motif is present at residues 2055-2059 (ICQII). Residues 2067 to 2086 (QVSSQTPQQPPTSTFQNSPS) are compositionally biased toward low complexity. The segment at 2067-2155 (QVSSQTPQQP…PYEPISPPQV (89 aa)) is disordered. The span at 2087–2110 (ALVSTPVRTKTSNRYSPESQAQSV) shows a compositional bias: polar residues. Residues S2102, S2120, S2136, S2151, and S2184 each carry the phosphoserine modification. Residues 2124–2142 (LVDKSRGSRPGKSPERSHV) show a composition bias toward basic and acidic residues. The segment at 2212–2273 (IFRKLNSSGG…EDIIRKALMG (62 aa)) is ID2. The CORNR box 3 motif lies at 2263–2267 (LEDII). The disordered stretch occupies residues 2287-2440 (SQPMGVVPGT…QYETLSDSDD (154 aa)). Positions 2296–2305 (TANTSVVTSG) are enriched in polar residues. Position 2399 is a phosphothreonine (T2399). Composition is skewed to polar residues over residues 2407-2418 (AVNQAAPHQQNR) and 2431-2440 (QYETLSDSDD). 2 positions are modified to phosphoserine: S2436 and S2438.

This sequence belongs to the N-CoR nuclear receptor corepressors family. In terms of assembly, forms a large corepressor complex that contains SIN3A/B and histone deacetylases HDAC1 and HDAC2. This complex associates with the thyroid receptor (TR) and the retinoid acid receptor (RAR) in the absence of ligand. Interacts directly with RARA; the interaction is facilitated with RARA trimethylation. Component of the N-Cor repressor complex, at least composed of CBFA2T3, HEXIM1, NCOR1, NCOR2, HDAC3, TBL1X, TBL1XR1, CORO2A and GPS2. Interacts with ZBTB33; the interaction serves to recruit the N-CoR complex to promoter regions containing methylated CpG dinucleotides. Interacts with TRIM28 and KDM3A. Interacts (via the RD1 domain) with BAZ1A (via its N-terminal); the interaction corepresses a number of NCOR1-regulated genes. Interacts with BCL6, C1D, DACH1, HEXIM1, HDAC7, RORA, RORC, SAP30, SIAH2, SIN3A and SIN3B. May interact with DEAF1. Interacts with RXRA. Interacts with SETD5. Interacts with VDR. Interacts with ZBTB7A. Interacts with AR. Interacts with HDAC3. Post-translationally, ubiquitinated; mediated by SIAH2 and leading to its subsequent proteasomal degradation.

Its subcellular location is the nucleus. Functionally, mediates transcriptional repression by certain nuclear receptors. Part of a complex which promotes histone deacetylation and the formation of repressive chromatin structures which may impede the access of basal transcription factors. Participates in the transcriptional repressor activity produced by BCL6. Recruited by ZBTB7A to the androgen response elements/ARE on target genes, negatively regulates androgen receptor signaling and androgen-induced cell proliferation. Mediates the NR1D1-dependent repression and circadian regulation of TSHB expression. The NCOR1-HDAC3 complex regulates the circadian expression of the core clock gene ARTNL/BMAL1 and the genes involved in lipid metabolism in the liver. This is Nuclear receptor corepressor 1 (NCOR1) from Homo sapiens (Human).